Consider the following 270-residue polypeptide: Putative phosphoenolpyruvate synthase regulatory protein (270 aa).

149–156 (GVSRSGKT) is an ADP binding site.

The protein belongs to the pyruvate, phosphate/water dikinase regulatory protein family. PSRP subfamily.

It carries out the reaction [pyruvate, water dikinase] + ADP = [pyruvate, water dikinase]-phosphate + AMP + H(+). It catalyses the reaction [pyruvate, water dikinase]-phosphate + phosphate + H(+) = [pyruvate, water dikinase] + diphosphate. In terms of biological role, bifunctional serine/threonine kinase and phosphorylase involved in the regulation of the phosphoenolpyruvate synthase (PEPS) by catalyzing its phosphorylation/dephosphorylation. This chain is Putative phosphoenolpyruvate synthase regulatory protein, found in Alteromonas mediterranea (strain DSM 17117 / CIP 110805 / LMG 28347 / Deep ecotype).